A 346-amino-acid polypeptide reads, in one-letter code: Uroporphyrinogen decarboxylase (346 aa).

Residues 21-25 (RQAGR), D71, Y146, S201, and H316 each bind substrate.

It belongs to the uroporphyrinogen decarboxylase family. As to quaternary structure, homodimer.

The protein localises to the cytoplasm. The catalysed reaction is uroporphyrinogen III + 4 H(+) = coproporphyrinogen III + 4 CO2. It participates in porphyrin-containing compound metabolism; protoporphyrin-IX biosynthesis; coproporphyrinogen-III from 5-aminolevulinate: step 4/4. In terms of biological role, catalyzes the decarboxylation of four acetate groups of uroporphyrinogen-III to yield coproporphyrinogen-III. The chain is Uroporphyrinogen decarboxylase from Rickettsia africae (strain ESF-5).